The chain runs to 676 residues: Methionine--tRNA ligase (676 aa).

Positions 15–25 (PYANGPIHLGH) match the 'HIGH' region motif. Zn(2+) is bound by residues C146, C149, C159, and C162. A 'KMSKS' region motif is present at residues 332-336 (KMSKS). K335 is a binding site for ATP. One can recognise a tRNA-binding domain in the interval 575–676 (DFAKIDLRIA…EGAQPGMRVK (102 aa)).

Belongs to the class-I aminoacyl-tRNA synthetase family. MetG type 1 subfamily. Homodimer. Zn(2+) serves as cofactor.

It localises to the cytoplasm. The catalysed reaction is tRNA(Met) + L-methionine + ATP = L-methionyl-tRNA(Met) + AMP + diphosphate. Its function is as follows. Is required not only for elongation of protein synthesis but also for the initiation of all mRNA translation through initiator tRNA(fMet) aminoacylation. This is Methionine--tRNA ligase from Shewanella sp. (strain ANA-3).